The following is a 231-amino-acid chain: ATP-dependent dethiobiotin synthetase BioD 2 (231 aa).

13 to 18 is a binding site for ATP; sequence SVGKTV. T17 is a binding site for Mg(2+). The active site involves K38. ATP-binding positions include D55, 112–115, 172–173, 201–203, and Q208; these read EGTG, NR, and PYL. Mg(2+)-binding residues include D55 and E112.

It belongs to the dethiobiotin synthetase family. In terms of assembly, homodimer. Requires Mg(2+) as cofactor.

Its subcellular location is the cytoplasm. It catalyses the reaction (7R,8S)-7,8-diammoniononanoate + CO2 + ATP = (4R,5S)-dethiobiotin + ADP + phosphate + 3 H(+). It functions in the pathway cofactor biosynthesis; biotin biosynthesis; biotin from 7,8-diaminononanoate: step 1/2. Its function is as follows. Catalyzes a mechanistically unusual reaction, the ATP-dependent insertion of CO2 between the N7 and N8 nitrogen atoms of 7,8-diaminopelargonic acid (DAPA, also called 7,8-diammoniononanoate) to form a ureido ring. The polypeptide is ATP-dependent dethiobiotin synthetase BioD 2 (Escherichia coli O157:H7).